The sequence spans 459 residues: Replication initiator protein (459 aa).

Essential for pSAM2 replication. The polypeptide is Replication initiator protein (repSA) (Streptomyces ambofaciens).